The sequence spans 463 residues: DNA-binding protein K10 (463 aa).

The span at 1–13 (MVSKNQFYQNWTM) shows a compositional bias: polar residues. Positions 1–304 (MVSKNQFYQN…RNGPGPGPMM (304 aa)) are disordered. A compositionally biased stretch (low complexity) spans 14-50 (QSQQQHPHQMQQQFQQQQQPNLQHRNNQSNNNNCNNN). Residues 85 to 94 (QMMFSSSQMP) are compositionally biased toward polar residues. 7 repeat units span residues 87-94 (MFSSSQMP), 95-102 (SDPLYIDF), 103-110 (SSPPPGFK), 111-118 (HNQVGSPK), 119-126 (KKSMKGIK), 127-134 (QQQHPSPN), and 135-142 (QQQPPSPN). Residues 87–142 (MFSSSQMPSDPLYIDFSSPPPGFKHNQVGSPKKKSMKGIKQQQHPSPNQQQPPSPN) form a 7 X approximate tandem repeats region. Over residues 142–193 (NQQQHPSPNQQQHPSPNQQQHPNSNQQQHLSPNQQQGKMNNQNNNHMNQSQQ) the composition is skewed to low complexity. A compositionally biased stretch (polar residues) spans 194-214 (PFNNQMNGSDWQRHPGNNPNQ). Composition is skewed to pro residues over residues 225 to 270 (GPPP…PPVP) and 282 to 291 (GGPPPPPPPL). The segment at residues 397–416 (DELFAQYKGQRDKFVSLYEA) is a DNA-binding region (H-T-H motif). Positions 426 to 463 (AATVKAKDAKSDKDKNAISSQSAAPKAGSAKDATIPNP) are disordered. Residues 430–441 (KAKDAKSDKDKN) show a composition bias toward basic and acidic residues.

In terms of assembly, interacts (via N-terminus) with sqd; the interaction is direct and may be involved in localization of sqd to the oocyte during oogenesis.

The protein localises to the nucleus. In terms of biological role, may be involved in localization of sqd to the oocyte during oogenesis. This is DNA-binding protein K10 (fs(1)K10) from Drosophila melanogaster (Fruit fly).